The following is a 415-amino-acid chain: Mitogen-activated protein kinase kinae MST7 (415 aa).

Positions 1-37 (MADPFAPRTMKRRNVKGLALTPAAPKPPPTAENAPIH) are disordered. The 266-residue stretch at 61–326 (LEVIKDLGSG…EELFERDPFV (266 aa)) folds into the Protein kinase domain. Residues 67 to 75 (LGSGNGGTV) and K90 contribute to the ATP site. Residues 363–409 (DLLRSSDSPTATYHGDDRPLETPTSAYRVDPRRGPAEGSAGLADQVD) are disordered.

The protein belongs to the protein kinase superfamily. STE Ser/Thr protein kinase family. MAP kinase kinase subfamily. In terms of assembly, homodimer. Interacts with the adapter protein MST50. Interacts with TRX2.

It carries out the reaction L-seryl-[protein] + ATP = O-phospho-L-seryl-[protein] + ADP + H(+). The enzyme catalyses L-threonyl-[protein] + ATP = O-phospho-L-threonyl-[protein] + ADP + H(+). Mitogen-activated protein kinase kinase; part of the MST11-MST7-PMK1 MAP kinase (MAPK) cascade that is essential for appressorium formation, penetration and invasive growth. The MST11-MST7-PMK1 MAP kinase cascade transduces signals from the cell surface sensors MDB2 and SHO1 that recognize various surface signals such as surface hydrophobicity, cutin monomers, and rice leaf waxes. MST7 acts as the upstream MAPKK that directly phosphorylates MAP kinase PMK1. The chain is Mitogen-activated protein kinase kinae MST7 from Pyricularia oryzae (strain 70-15 / ATCC MYA-4617 / FGSC 8958) (Rice blast fungus).